A 430-amino-acid polypeptide reads, in one-letter code: Trigger factor (430 aa).

A PPIase FKBP-type domain is found at 157–242; it reads GDLVALETWS…AVEVSEPVLP (86 aa).

This sequence belongs to the FKBP-type PPIase family. Tig subfamily.

It localises to the cytoplasm. The enzyme catalyses [protein]-peptidylproline (omega=180) = [protein]-peptidylproline (omega=0). Functionally, involved in protein export. Acts as a chaperone by maintaining the newly synthesized protein in an open conformation. Functions as a peptidyl-prolyl cis-trans isomerase. The chain is Trigger factor from Xanthomonas campestris pv. campestris (strain B100).